A 64-amino-acid polypeptide reads, in one-letter code: Micrurotoxin 2 (64 aa).

Cystine bridges form between C3/C24, C6/C11, C17/C41, C45/C57, and C58/C63.

It belongs to the three-finger toxin family. Ancestral subfamily. As to expression, expressed by the venom gland.

It is found in the secreted. Its function is as follows. Allosteric modulator of the GABA(A) receptor (GABR), possibly increasing receptor affinity for the agonist, thus enhancing receptor opening and macroscopic desensitization. In vivo, intracerebroventricular injection into mice results in periods of reduced basal activity, followed by bursts of intense seizures and death. In Micrurus mipartitus (Red-tailed coral snake), this protein is Micrurotoxin 2.